We begin with the raw amino-acid sequence, 195 residues long: Protein SYM1 (195 aa).

4 helical membrane passes run 17–39 (LITNMITTGLLVGGGDALAQFFF), 59–78 (RAIIYGSLIFAPIGDKWYKF), 99–121 (STLLRVMVDQLVFAPFIGIPLYY), and 168–190 (PVQFRLLAVNIISIGWNTYLSYV).

The protein belongs to the peroxisomal membrane protein PXMP2/4 family.

It localises to the mitochondrion inner membrane. Its function is as follows. May be involved in cellular response to stress. Required to maintain mitochondrial DNA (mtDNA) integrity and stability. This is Protein SYM1 (SYM1) from Candida albicans (strain SC5314 / ATCC MYA-2876) (Yeast).